The chain runs to 188 residues: Heterodisulfide reductase subunit C-like protein (188 aa).

4Fe-4S ferredoxin-type domains lie at 34–64 (KELGAERLMYCMQCGACASICPLARVGFEWY) and 78–109 (DELLDDPTPWACVACNRCTEICPRRVSPFEVM). [4Fe-4S] cluster-binding residues include C44, C47, C50, C54, C89, C92, C95, and C99.

This sequence belongs to the HdrC family. As to quaternary structure, the heterodisulfide reductase is composed of three subunits; HdlA, HdlB and HdlC. It forms a complex with the F420-non-reducing hydrogenase (Mvh), which provides the reducing equivalents to the heterodisulfide reductase.

Its subcellular location is the cytoplasm. Its function is as follows. Has oxidoreductase activity. The Hdl and Mvh subunits may together mediate electron transfer from hydrogen to an unidentified electron acceptor on the cytoplasmic side of the membrane. This Archaeoglobus profundus (strain DSM 5631 / JCM 9629 / NBRC 100127 / Av18) protein is Heterodisulfide reductase subunit C-like protein (hdlC).